The following is a 627-amino-acid chain: MEGLAGYVYKAASEGKVLTLAALLLNRSESDIRYLLGYVSQQGGQRSTPLIIAARNGHAKVVRLLLEHYRVQTQQTGTVRFDGYVIDGATALWCAAGAGHFEVVKLLVSHGANVNHTTVTNSTPLRAACFDGRLDIVKYLVENNANISIANKYDNTCLMIAAYKGHTDVVRYLLEQRADPNAKAHCGATALHFAAEAGHIDIVKELIKWRAAIVVNGHGMTPLKVAAESCKADVVELLLSHADCDRRSRIEALELLGASFANDRENYDIMKTYHYLYLAMLERFQDGDNILEKEVLPPIHAYGNRTECRNPQELEAIRQDRDALHMEGLIVRERILGADNIDVSHPIIYRGAVYADNMEFEQCIKLWLHALHLRQKGNRNTHKDLLRFAQVFSQMIHLNEAVKAPDIECVLRCSVLEIEQSMNRVKNISDADVHSAMDNYECNLYTFLYLVCISTKTQCSEEDQCRINKQIYNLIHLDPRTREGFSLLHLAVNSNTPVDDFHTNDVCSFPNALVTKLLLDCGAEVNAVDNEGNSALHIIVQYNRPISDFLTLHSIIISLVEAGAHTDMTNKQNKTPLDKSTTGVSEILLKTQMKMSLKCLAARAVRANDINYQDQIPRTLEEFVGFH.

ANK repeat units follow at residues 45 to 74 (QRST…VQTQ), 87 to 116 (DGAT…NVNH), 120 to 149 (TNST…NISI), and 153 to 182 (YDNT…DPNA). Histidine 185, cysteine 186, and histidine 218 together coordinate Zn(2+). ANK repeat units follow at residues 186–215 (CGAT…AIVV) and 218–248 (HGMT…DRRS). One copy of the TPR repeat lies at 344–377 (SHPIIYRGAVYADNMEFEQCIKLWLHALHLRQKG). 2 ANK repeats span residues 483–527 (EGFS…EVNA) and 531–568 (EGNS…HTDM).

This sequence belongs to the fem-1 family. In terms of assembly, component of a CRL2 E3 ubiquitin-protein ligase complex, also named ECS (Elongin BC-CUL2/5-SOCS-box protein) complex, composed of CUL2, Elongin BC (ELOB and ELOC), RBX1 and substrate-specific adapter FEM1B. Homooligomer. Interacts with PPM1F and PHTF1. Interacts with the death domain of FAS/TNFRSF6 and TNFRSF1A. Interacts with CHEK1. Interacts with NKX3-1. As to expression, expressed in pancreatic islets, within both beta cells and non-beta cells (at protein level). Highly expressed in adult testis; expressed in all types of spermatogonia. Also expressed in the prostate of neonatal mice.

Its subcellular location is the cytoplasm. The protein localises to the nucleus. Its pathway is protein modification; protein ubiquitination. With respect to regulation, activity of the CRL2(FEM1B) complex toward FNIP1 is inhibited by BEX family proteins (BEX1, BEX2, BEX3 and/or BEX4) in absence of reductive stress. Mechanistically, BEX proteins act as pseudosubstrate inhibitors that associate with FEM1B via zinc in absence of reductive stress, thereby preventing association between FEM1B and FNIP1. Substrate-recognition component of a Cul2-RING (CRL2) E3 ubiquitin-protein ligase complex of the DesCEND (destruction via C-end degrons) pathway, which recognizes a C-degron located at the extreme C terminus of target proteins, leading to their ubiquitination and degradation. The C-degron recognized by the DesCEND pathway is usually a motif of less than ten residues and can be present in full-length proteins, truncated proteins or proteolytically cleaved forms. The CRL2(FEM1B) complex specifically recognizes proteins ending with -Gly-Leu-Asp-Arg, such as CDK5R1, leading to their ubiquitination and degradation. Also acts as a regulator of the reductive stress response by mediating ubiquitination of reduced FNIP1: in response to reductive stress, the CRL2(FEM1B) complex specifically recognizes a conserved Cys degron in FNIP1 when this degron is reduced, leading to FNIP1 degradation and subsequent activation of mitochondria to recalibrate reactive oxygen species (ROS). Mechanistically, recognizes and binds reduced FNIP1 through two interface zinc ions, which act as a molecular glue that recruit reduced FNIP1 to FEM1B. Promotes ubiquitination of GLI1, suppressing GLI1 transcriptional activator activity. Promotes ubiquitination and degradation of ANKRD37. Promotes ubiquitination and degradation of SLBP. Involved in apoptosis by acting as a death receptor-associated protein that mediates apoptosis. Also involved in glucose homeostasis in pancreatic islet. May also act as an adapter/mediator in replication stress-induced signaling that leads to the activation of CHEK1. The polypeptide is Protein fem-1 homolog B (Mus musculus (Mouse)).